The primary structure comprises 206 residues: 2,3-bisphosphoglycerate-dependent phosphoglycerate mutase (206 aa).

Residues 9 to 16 (RHGQSEWN), 22 to 23 (TG), Arg-61, 88 to 91 (ERDY), Lys-99, 115 to 116 (RR), and 159 to 160 (GN) contribute to the substrate site. His-10 serves as the catalytic Tele-phosphohistidine intermediate. Glu-88 serves as the catalytic Proton donor/acceptor.

The protein belongs to the phosphoglycerate mutase family. BPG-dependent PGAM subfamily. In terms of assembly, homodimer.

It catalyses the reaction (2R)-2-phosphoglycerate = (2R)-3-phosphoglycerate. The protein operates within carbohydrate degradation; glycolysis; pyruvate from D-glyceraldehyde 3-phosphate: step 3/5. Catalyzes the interconversion of 2-phosphoglycerate and 3-phosphoglycerate. This is 2,3-bisphosphoglycerate-dependent phosphoglycerate mutase from Brucella anthropi (strain ATCC 49188 / DSM 6882 / CCUG 24695 / JCM 21032 / LMG 3331 / NBRC 15819 / NCTC 12168 / Alc 37) (Ochrobactrum anthropi).